A 232-amino-acid chain; its full sequence is RNA chaperone ProQ (232 aa).

A disordered region spans residues 105-182 (EAKARVQAQR…REEQHTPVSD (78 aa)). A compositionally biased stretch (basic and acidic residues) spans 117 to 136 (QQAKKREAAAAAGEKEDAPR). Residues 137-146 (RERKPRPTTP) show a composition bias toward basic residues. Residues 147 to 177 (RRKEGAERKPRAQKPVEKAPKTAKAPREEQH) are compositionally biased toward basic and acidic residues.

It belongs to the ProQ family.

It localises to the cytoplasm. In terms of biological role, RNA chaperone with significant RNA binding, RNA strand exchange and RNA duplexing activities. May regulate ProP activity through an RNA-based, post-transcriptional mechanism. The chain is RNA chaperone ProQ from Shigella dysenteriae serotype 1 (strain Sd197).